A 301-amino-acid chain; its full sequence is UDP-N-acetylenolpyruvoylglucosamine reductase (301 aa).

The 165-residue stretch at 30 to 194 (VGGEADYLVF…LSVKFALAPG (165 aa)) folds into the FAD-binding PCMH-type domain. R173 is a catalytic residue. The Proton donor role is filled by S223. E293 is an active-site residue.

It belongs to the MurB family. Requires FAD as cofactor.

It localises to the cytoplasm. The catalysed reaction is UDP-N-acetyl-alpha-D-muramate + NADP(+) = UDP-N-acetyl-3-O-(1-carboxyvinyl)-alpha-D-glucosamine + NADPH + H(+). Its pathway is cell wall biogenesis; peptidoglycan biosynthesis. Its function is as follows. Cell wall formation. This Streptococcus pneumoniae (strain 70585) protein is UDP-N-acetylenolpyruvoylglucosamine reductase.